We begin with the raw amino-acid sequence, 537 residues long: Cytochrome P450 monooxygenase alt2 (537 aa).

The chain crosses the membrane as a helical span at residues 4-24 (HLLILAAVVLLIIHIVNNFLI). Residue Cys474 participates in heme binding.

Belongs to the cytochrome P450 family. The cofactor is heme.

It localises to the membrane. It functions in the pathway secondary metabolite biosynthesis. Its function is as follows. Cytochrome P450 monooxygenase; part of the gene cluster that mediates the biosynthesis of alternapyrone derivatives. Alternapyrone is a decaketide with octa-methylation from methionine on every C2 unit except the third unit. All the domains in the polyketide synthase alt5 are apparently involved in alternapyrone synthesis, that is, the 8 CMeT, 7 KR, 7 DH, and 4 ER reactions in the 9 KS-mediated condensation steps required for alternapyrone synthesis. the alternapyrone produced by alt5 might be intensively modified by cytochrome P450 monooxygenases alt1, alt2 and alt3 and FAD-dependent oxidoreductase alt4 present in the alt gene cluster. The sequence is that of Cytochrome P450 monooxygenase alt2 from Alternaria solani.